The chain runs to 62 residues: Beta-defensin 33 (62 aa).

The N-terminal stretch at 1–20 (MRLLFLLFLLLVCLAQKTSG) is a signal peptide. Cystine bridges form between Cys-30–Cys-59, Cys-37–Cys-52, and Cys-45–Cys-60.

The protein belongs to the beta-defensin family.

The protein localises to the secreted. Functionally, has antibacterial activity. This is Beta-defensin 33 (Defb33) from Rattus norvegicus (Rat).